Consider the following 436-residue polypeptide: Protein FAM83A (436 aa).

A DUF1669 region spans residues 1–298; sequence MSRSRHVGKI…LYASSKPLMG (298 aa). Residues 73–95 form a disordered region; it reads AQAKEPPDAPDSAGGAESGPRGL. Residues Ser301, Ser329, Ser350, and Ser359 each carry the phosphoserine modification. The disordered stretch occupies residues 302 to 371; sequence PRLVAPFQPN…APIPPTVPRL (70 aa). The segment covering 321-349 has biased composition (polar residues); that stretch reads LSGTSDSASDRTSSNPFSSLSTGSNAHNQ. Residues 350–359 show a composition bias toward low complexity; the sequence is SLSTSSGPSS.

It belongs to the FAM83 family. As to quaternary structure, directly interacts (via DUF1669) with casein kinase isoforms CSNK1A1, CSNK1A1L, CSNK1D and CSNK1E. In terms of processing, may be phosphorylated upon EGFR activation. As to expression, widely expressed, with relatively higher expression levels in adipose tissues, especially in epididymal and inguinal white adipose tissue (at protein level).

It localises to the cytoplasm. The protein localises to the mitochondrion. Its function is as follows. Involved in mitochondrial maintenance during adipogenesis. May be acting by playing a role in the maintenance of normal mitochondrial function. The chain is Protein FAM83A from Mus musculus (Mouse).